A 220-amino-acid chain; its full sequence is 7-cyano-7-deazaguanine synthase (220 aa).

7 to 17 (ISGGMDSSTAA) serves as a coordination point for ATP. Residues Cys-187, Cys-195, Cys-198, and Cys-201 each contribute to the Zn(2+) site.

It belongs to the QueC family. Zn(2+) serves as cofactor.

The catalysed reaction is 7-carboxy-7-deazaguanine + NH4(+) + ATP = 7-cyano-7-deazaguanine + ADP + phosphate + H2O + H(+). It participates in purine metabolism; 7-cyano-7-deazaguanine biosynthesis. Catalyzes the ATP-dependent conversion of 7-carboxy-7-deazaguanine (CDG) to 7-cyano-7-deazaguanine (preQ(0)). This is 7-cyano-7-deazaguanine synthase from Campylobacter hominis (strain ATCC BAA-381 / DSM 21671 / CCUG 45161 / LMG 19568 / NCTC 13146 / CH001A).